Reading from the N-terminus, the 172-residue chain is Adenine phosphoribosyltransferase (172 aa).

Belongs to the purine/pyrimidine phosphoribosyltransferase family. In terms of assembly, homodimer.

The protein resides in the cytoplasm. It catalyses the reaction AMP + diphosphate = 5-phospho-alpha-D-ribose 1-diphosphate + adenine. The protein operates within purine metabolism; AMP biosynthesis via salvage pathway; AMP from adenine: step 1/1. In terms of biological role, catalyzes a salvage reaction resulting in the formation of AMP, that is energically less costly than de novo synthesis. The chain is Adenine phosphoribosyltransferase from Prochlorococcus marinus (strain SARG / CCMP1375 / SS120).